A 322-amino-acid polypeptide reads, in one-letter code: Follistatin-A (322 aa).

A signal peptide spans 1–32; it reads MLRMLKRQQLHPGMILLLFWLCYLIEDQKVQA. Residues 33 to 106 form the TB domain; the sequence is GNCWLQQGKN…TCDNVDCGPG (74 aa). Disulfide bonds link Cys35/Cys58, Cys45/Cys91, Cys59/Cys94, Cys98/Cys109, Cys103/Cys119, Cys121/Cys153, Cys125/Cys146, and Cys135/Cys167. N-linked (GlcNAc...) asparagine glycosylation occurs at Asn75. Positions 97–120 constitute a Follistatin-like 1 domain; the sequence is TCDNVDCGPGKRCKMNRRSKPRCV. Kazal-like domains lie at 103-169, 189-244, and 267-321; these read CGPG…KCKK, NAYC…KCIK, and RGRC…SCNC. Asn127 is a glycosylation site (N-linked (GlcNAc...) asparagine). The Follistatin-like 2 domain maps to 170-193; it reads TCRDVLCPGSSTCVVDQTNNAYCV. Cystine bridges form between Cys195-Cys228, Cys199-Cys221, and Cys210-Cys242. The region spanning 247–271 is the Follistatin-like 3 domain; the sequence is SCDDIHCSAGKKCLWDAKMSRGRCA. 3 cysteine pairs are disulfide-bonded: Cys273/Cys305, Cys277/Cys298, and Cys287/Cys319. Asn291 carries an N-linked (GlcNAc...) asparagine glycan.

As to quaternary structure, monomer. In terms of tissue distribution, not expressed in the organizer region. Expression in gastrulating embryos is confined to anterior and paraxial regions, which give rise to head mesoderm and the first five somites. In addition, expressed transiently in a subset of cells in the posterior notochord anlage. Later, expression is seen in brain, eyes and somites.

Functionally, binds directly to activin and functions as an activin antagonist. Specific inhibitor of the biosynthesis and secretion of pituitary follicle stimulating hormone (fsh). Inhibits bmp-signaling during later stages of development including late phases of dorsoventral patterning, to refine the early pattern set up by the interaction of chordino and bmp2/4. Not involved in organizer function or early phases of dorsoventral pattern formation. The sequence is that of Follistatin-A (fsta) from Danio rerio (Zebrafish).